The primary structure comprises 164 residues: S-ribosylhomocysteine lyase (164 aa).

3 residues coordinate Fe cation: His-61, His-65, and Cys-131.

This sequence belongs to the LuxS family. In terms of assembly, homodimer. Fe cation serves as cofactor.

It catalyses the reaction S-(5-deoxy-D-ribos-5-yl)-L-homocysteine = (S)-4,5-dihydroxypentane-2,3-dione + L-homocysteine. Its function is as follows. Involved in the synthesis of autoinducer 2 (AI-2) which is secreted by bacteria and is used to communicate both the cell density and the metabolic potential of the environment. The regulation of gene expression in response to changes in cell density is called quorum sensing. Catalyzes the transformation of S-ribosylhomocysteine (RHC) to homocysteine (HC) and 4,5-dihydroxy-2,3-pentadione (DPD). The polypeptide is S-ribosylhomocysteine lyase (Bifidobacterium longum (strain NCC 2705)).